The sequence spans 982 residues: Filament-like plant protein 4 (982 aa).

Coiled coils occupy residues Asp39–Glu83 and Glu125–Leu291. The segment at Asp311–Met333 is disordered. The span at Val323 to Met333 shows a compositional bias: low complexity. Residues Asp345–Ala401 adopt a coiled-coil conformation. A compositionally biased stretch (polar residues) spans Gln423–Ser433. 2 disordered regions span residues Gln423–Lys466 and Gln687–Cys711. The stretch at Glu452–Glu475 forms a coiled coil. Over residues Asn457 to Lys466 the composition is skewed to basic and acidic residues. Over residues Glu693–Ser705 the composition is skewed to polar residues. The stretch at Ala722–Leu885 forms a coiled coil. Polar residues-rich tracts occupy residues Thr896–Leu910 and Ala918–Lys943. The interval Thr896–Lys982 is disordered.

This sequence belongs to the FPP family. As to quaternary structure, interacts with WPP/MAF proteins.

The protein is Filament-like plant protein 4 (FPP4) of Arabidopsis thaliana (Mouse-ear cress).